We begin with the raw amino-acid sequence, 315 residues long: tRNA-cytidine(32) 2-sulfurtransferase (315 aa).

The PP-loop motif signature appears at 39 to 44 (SGGKDS). Residues Cys-114, Cys-117, and Cys-205 each contribute to the [4Fe-4S] cluster site.

This sequence belongs to the TtcA family. In terms of assembly, homodimer. Requires Mg(2+) as cofactor. It depends on [4Fe-4S] cluster as a cofactor.

Its subcellular location is the cytoplasm. It catalyses the reaction cytidine(32) in tRNA + S-sulfanyl-L-cysteinyl-[cysteine desulfurase] + AH2 + ATP = 2-thiocytidine(32) in tRNA + L-cysteinyl-[cysteine desulfurase] + A + AMP + diphosphate + H(+). It functions in the pathway tRNA modification. In terms of biological role, catalyzes the ATP-dependent 2-thiolation of cytidine in position 32 of tRNA, to form 2-thiocytidine (s(2)C32). The sulfur atoms are provided by the cysteine/cysteine desulfurase (IscS) system. This chain is tRNA-cytidine(32) 2-sulfurtransferase, found in Ralstonia pickettii (strain 12J).